We begin with the raw amino-acid sequence, 249 residues long: Eukaryotic translation initiation factor 3 subunit J-A (249 aa).

Acidic residues predominate over residues 1 to 15 (MADADSWDADSFEPE). The interval 1–104 (MADADSWDAD…DTPLTPEDEL (104 aa)) is disordered. Positions 16–27 (EPIKKAAVHDKW) are enriched in basic and acidic residues. The span at 28–52 (EGEDEDDDVKDNWDDDEEEEKEEEE) shows a compositional bias: acidic residues. A coiled-coil region spans residues 34–96 (DDVKDNWDDD…QQLEETKRDT (63 aa)). The span at 53–96 (EKKTEAKPTEKKKLSEKIKEKENLQRKKQEELRKQQLEETKRDT) shows a compositional bias: basic and acidic residues.

This sequence belongs to the eIF-3 subunit J family. As to quaternary structure, component of the eukaryotic translation initiation factor 3 (eIF-3) complex, which is composed of 13 subunits: eif3a, eif3b, eif3c, eif3d, eif3e, eif3f, eif3g, eif3h, eif3i, eif3j, eif3k, eif3l and eif3m.

The protein resides in the cytoplasm. In terms of biological role, component of the eukaryotic translation initiation factor 3 (eIF-3) complex, which is involved in protein synthesis of a specialized repertoire of mRNAs and, together with other initiation factors, stimulates binding of mRNA and methionyl-tRNAi to the 40S ribosome. The eIF-3 complex specifically targets and initiates translation of a subset of mRNAs involved in cell proliferation. The protein is Eukaryotic translation initiation factor 3 subunit J-A (eif3ja) of Danio rerio (Zebrafish).